The following is a 364-amino-acid chain: Dihydroorotate dehydrogenase (quinone) (364 aa).

FMN is bound by residues alanine 61–lysine 65 and threonine 85. Lysine 65 contributes to the substrate binding site. Asparagine 110–phenylalanine 114 is a substrate binding site. Residues asparagine 139 and asparagine 170 each contribute to the FMN site. Asparagine 170 contacts substrate. The active-site Nucleophile is the serine 173. Asparagine 175 is a substrate binding site. The FMN site is built by lysine 214 and alanine 242. Asparagine 243–threonine 244 lines the substrate pocket. FMN is bound by residues glycine 266, glycine 295, and tyrosine 316–serine 317.

This sequence belongs to the dihydroorotate dehydrogenase family. Type 2 subfamily. Monomer. Requires FMN as cofactor.

The protein localises to the cell membrane. The enzyme catalyses (S)-dihydroorotate + a quinone = orotate + a quinol. It participates in pyrimidine metabolism; UMP biosynthesis via de novo pathway; orotate from (S)-dihydroorotate (quinone route): step 1/1. In terms of biological role, catalyzes the conversion of dihydroorotate to orotate with quinone as electron acceptor. The chain is Dihydroorotate dehydrogenase (quinone) from Rhodopseudomonas palustris (strain BisB5).